A 149-amino-acid polypeptide reads, in one-letter code: Cell division protein SepF (149 aa).

Belongs to the SepF family. Homodimer. Interacts with FtsZ.

Its subcellular location is the cytoplasm. Its function is as follows. Cell division protein that is part of the divisome complex and is recruited early to the Z-ring. Probably stimulates Z-ring formation, perhaps through the cross-linking of FtsZ protofilaments. Its function overlaps with FtsA. In Pelotomaculum thermopropionicum (strain DSM 13744 / JCM 10971 / SI), this protein is Cell division protein SepF.